Consider the following 581-residue polypeptide: Proline--tRNA ligase (581 aa).

Belongs to the class-II aminoacyl-tRNA synthetase family. ProS type 1 subfamily. As to quaternary structure, homodimer.

The protein resides in the cytoplasm. It catalyses the reaction tRNA(Pro) + L-proline + ATP = L-prolyl-tRNA(Pro) + AMP + diphosphate. Functionally, catalyzes the attachment of proline to tRNA(Pro) in a two-step reaction: proline is first activated by ATP to form Pro-AMP and then transferred to the acceptor end of tRNA(Pro). As ProRS can inadvertently accommodate and process non-cognate amino acids such as alanine and cysteine, to avoid such errors it has two additional distinct editing activities against alanine. One activity is designated as 'pretransfer' editing and involves the tRNA(Pro)-independent hydrolysis of activated Ala-AMP. The other activity is designated 'posttransfer' editing and involves deacylation of mischarged Ala-tRNA(Pro). The misacylated Cys-tRNA(Pro) is not edited by ProRS. This Chlamydia trachomatis serovar A (strain ATCC VR-571B / DSM 19440 / HAR-13) protein is Proline--tRNA ligase.